Consider the following 647-residue polypeptide: A-type voltage-gated potassium channel KCND1 (647 aa).

Residues 1-183 (MAAGVATWLP…RAFENPHTST (183 aa)) are Cytoplasmic-facing. Positions 2–20 (AAGVATWLPFARAAAVGWL) are interaction with KCNIP1, KCNIP2, and other family members. The Zn(2+) site is built by H104, C131, and C132. The interval 144-164 (AQRLAEDEEAEQTGDGPALPA) is disordered. The helical transmembrane segment at 184-205 (AALVFYYVTGFFIAVSVIANVV) threads the bilayer. Over 206-230 (ETIPCRGPARRPPREQPCGDRFPLA) the chain is Extracellular. Residues 231–252 (FFCMDTACVLIFTGEYLLRLFA) form a helical membrane-spanning segment. At 253 to 263 (APSRCRFLRSV) the chain is on the cytoplasmic side. A helical membrane pass occupies residues 264-284 (MSLIDVVAILPYYIGLLVPKN). The Extracellular portion of the chain corresponds to 285 to 287 (EDV). Residues 288 to 308 (SGAFVTLRVFRVFRIFKFSRH) form a helical; Voltage-sensor membrane-spanning segment. The Cytoplasmic portion of the chain corresponds to 309–323 (SQGLRILGYTLKSCA). Residues 310–323 (QGLRILGYTLKSCA) are S4-S5 linker. A helical transmembrane segment spans residues 324-345 (SELGFLLFSLTMAIIIFATVMF). At 346 to 359 (YAEKGTSKTNFTSI) the chain is on the extracellular side. The segment at residues 360-371 (PAAFWYTIVTMT) is an intramembrane region (helical). The short motif at 372-377 (TLGYGD) is the Selectivity filter element. An intramembrane segment occupies 372–379 (TLGYGDMV). Residues 380–386 (PSTIAGK) are Extracellular-facing. A helical membrane pass occupies residues 387–415 (IFGSICSLSGVLVIALPVPVIVSNFSRIY). Topologically, residues 416 to 647 (HQNQRADKRR…LPETVKISSL (232 aa)) are cytoplasmic. The segment at 474–489 (FEQQHHHLLHCLEKTT) is required for dendritic targeting. Over residues 510-520 (GRTSRSTSVSS) the composition is skewed to low complexity. Residues 510–531 (GRTSRSTSVSSQPVGPSSLLSS) are disordered. A compositionally biased stretch (polar residues) spans 521–530 (QPVGPSSLLS). Residue S555 is modified to Phosphoserine. Disordered stretches follow at residues 564-584 (GLRRSPGPQSRSSLNAKPHDS) and 601-634 (IPTPPANTPDESQPSSPGGGGRASSTLRNSRLGT).

This sequence belongs to the potassium channel family. D (Shal) (TC 1.A.1.2) subfamily. Kv4.1/KCND1 sub-subfamily. As to quaternary structure, component of heteromultimeric potassium channels. Identified in potassium channel complexes containing KCND1, KCND2, KCND3, KCNIP1, KCNIP2, KCNIP3, KCNIP4, DPP6 and DPP10. Detected in carotid body chemoreceptor cells and in frontal cortex.

Its subcellular location is the cell membrane. The catalysed reaction is K(+)(in) = K(+)(out). Functionally, A-type voltage-gated potassium channel that mediates transmembrane potassium transport in excitable membranes in the brain. Mediates A-type current I(SA) in suprachiasmatic nucleus (SCN) neurons. Exhibits a low-threshold A-type current with a hyperpolarized steady-state inactivation midpoint and the recovery process was steeply voltage-dependent, with recovery being markedly faster at more negative potentials. May regulates repetitive firing rates in the suprachiasmatic nucleus (SCN) neurons and circadian rhythms in neuronal excitability and behavior. Contributes to the regulation of the circadian rhythm of action potential firing in suprachiasmatic nucleus neurons, which regulates the circadian rhythm of locomotor activity. The regulatory subunit KCNIP1 modulates the kinetics of channel inactivation, increases the current amplitudes and accelerates recovery from inactivation, shifts activation in a depolarizing direction. The regulatory subunit DPP10 decreases the voltage sensitivity of the inactivation channel gating. This Oryctolagus cuniculus (Rabbit) protein is A-type voltage-gated potassium channel KCND1.